A 57-amino-acid polypeptide reads, in one-letter code: Protein translocase subunit SecE (57 aa).

Residues 34–54 (AGILLIGAIGFLVFLIMGGIV) traverse the membrane as a helical segment.

It belongs to the SecE/SEC61-gamma family. Component of the Sec protein translocase complex. Heterotrimer consisting of SecY (alpha), SecG (beta) and SecE (gamma) subunits. The heterotrimers can form oligomers, although 1 heterotrimer is thought to be able to translocate proteins. Interacts with the ribosome. May interact with SecDF, and other proteins may be involved.

Its subcellular location is the cell membrane. Its function is as follows. Essential subunit of the Sec protein translocation channel SecYEG. Clamps together the 2 halves of SecY. May contact the channel plug during translocation. This is Protein translocase subunit SecE from Halobacterium salinarum (strain ATCC 29341 / DSM 671 / R1).